Consider the following 180-residue polypeptide: Isopentenyl-diphosphate Delta-isomerase (180 aa).

H29 and H36 together coordinate Mn(2+). C71 is a catalytic residue. Residue H73 coordinates Mn(2+). E91 serves as a coordination point for Mg(2+). Mn(2+) is bound by residues E118 and E120. E120 is a catalytic residue.

It belongs to the IPP isomerase type 1 family. Requires Mg(2+) as cofactor. Mn(2+) is required as a cofactor.

It localises to the cytoplasm. It catalyses the reaction isopentenyl diphosphate = dimethylallyl diphosphate. It participates in isoprenoid biosynthesis; dimethylallyl diphosphate biosynthesis; dimethylallyl diphosphate from isopentenyl diphosphate: step 1/1. Catalyzes the 1,3-allylic rearrangement of the homoallylic substrate isopentenyl (IPP) to its highly electrophilic allylic isomer, dimethylallyl diphosphate (DMAPP). The protein is Isopentenyl-diphosphate Delta-isomerase of Kocuria rhizophila (strain ATCC 9341 / DSM 348 / NBRC 103217 / DC2201).